Here is an 804-residue protein sequence, read N- to C-terminus: Phenylalanine--tRNA ligase beta subunit (804 aa).

A tRNA-binding domain is found at 38 to 148; it reads RAAFRAFTIA…ENAPVGTSFA (111 aa). A B5 domain is found at 401–476; that stretch reads HTARVIDFPV…RIHGINRIDP (76 aa). Mg(2+) contacts are provided by Asp454, Asp460, Glu463, and Glu464. The 94-residue stretch at 710–803 folds into the FDX-ACB domain; sequence SLFQSLKRDY…VAKQTGGVLR (94 aa).

The protein belongs to the phenylalanyl-tRNA synthetase beta subunit family. Type 1 subfamily. In terms of assembly, tetramer of two alpha and two beta subunits. Mg(2+) serves as cofactor.

The protein resides in the cytoplasm. The enzyme catalyses tRNA(Phe) + L-phenylalanine + ATP = L-phenylalanyl-tRNA(Phe) + AMP + diphosphate + H(+). This Brucella melitensis biotype 1 (strain ATCC 23456 / CCUG 17765 / NCTC 10094 / 16M) protein is Phenylalanine--tRNA ligase beta subunit.